We begin with the raw amino-acid sequence, 140 residues long: Pro-vaccinia growth factor (140 aa).

A signal peptide spans 1 to 18 (MSMKYLMLLFAAMIIRSF). The Extracellular segment spans residues 19–100 (ADSGNAIETT…SENPNTTTSY (82 aa)). A glycan (N-linked (GlcNAc...) asparagine; by host) is linked at Asn34. Positions 41–81 (AIRLCGPEGDGYCLHGDCIHARDIDGMYCRCSHGYTGIRCQ) constitute an EGF-like domain. 3 disulfides stabilise this stretch: Cys45-Cys58, Cys53-Cys69, and Cys71-Cys80. N-linked (GlcNAc...) asparagine; by host glycosylation occurs at Asn95. A helical transmembrane segment spans residues 101 to 121 (IPSPGIVLVLVGIIIITCCSL). Residues 122–140 (SVYRFTRRTKLPIQDMVVP) lie on the Cytoplasmic side of the membrane.

This sequence belongs to the orthopoxvirus OPG019 family. Vaccinia growth factor interacts with host EGFR and promotes EGFR dimerization.

The protein resides in the host membrane. Its subcellular location is the secreted. Its function is as follows. Stimulates cellular proliferation (hyperplasia)and mobility around infected cells to promote rapid and efficient spread of infection. This effect is beneficial for virus replication in vivo, because poxviruses replicate possibly better in proliferating cells than in quiescent cells. Acts by binding host EGFR, inducing its dimerization, autophosphorylation and leading to activation of several cellular pathways regulating cell proliferation or cell survival. The activation by host EGFR of mitogen activated protein kinases (MAPK) and extracellular-signal regulated kinases (ERK) are essential for the positive effect of vaccinia growth factor on poxvirus virulence in vivo. The polypeptide is Pro-vaccinia growth factor (OPG019) (Vaccinia virus (strain L-IVP) (VACV)).